A 101-amino-acid polypeptide reads, in one-letter code: Small ribosomal subunit protein bS18c (101 aa).

The protein belongs to the bacterial ribosomal protein bS18 family. Part of the 30S ribosomal subunit.

It is found in the plastid. It localises to the chloroplast. The sequence is that of Small ribosomal subunit protein bS18c from Aethionema cordifolium (Lebanon stonecress).